We begin with the raw amino-acid sequence, 464 residues long: Delta(5) fatty acid desaturase A (464 aa).

In terms of domain architecture, Cytochrome b5 heme-binding spans 13 to 90 (GKQYSWSELA…LKNYEIGYIS (78 aa)). Positions 48 and 71 each coordinate heme. Helical transmembrane passes span 125–145 (AVSI…TYYL) and 153–173 (FYLN…FSMH). A Histidine box-1 motif is present at residues 176–180 (HDSCH). The Histidine box-2 motif lies at 212-217 (HVIGHH). The helical transmembrane segment at 318–338 (FTDLICYFLIAEFVFGWYLTI) threads the bilayer. The Histidine box-3 motif lies at 396–400 (QVVHH).

This sequence belongs to the fatty acid desaturase type 1 family. Fe cation is required as a cofactor.

Its subcellular location is the membrane. Specific for desaturation of the 5 position in C16 and C18 fatty acids. This Dictyostelium discoideum (Social amoeba) protein is Delta(5) fatty acid desaturase A (fadA).